Here is a 273-residue protein sequence, read N- to C-terminus: Tryptase-2 (273 aa).

The first 18 residues, 1–18, serve as a signal peptide directing secretion; the sequence is MLHLLALALLLSLVSAAP. Residues 19–28 constitute a propeptide, activation peptide; it reads APGQALQRSG. Positions 29 to 270 constitute a Peptidase S1 domain; that stretch reads IIGGKEAPGS…YLDWIHQYVP (242 aa). Cysteine 57 and cysteine 73 are oxidised to a cystine. Catalysis depends on charge relay system residues histidine 72 and aspartate 119. Disulfide bonds link cysteine 153/cysteine 228, cysteine 186/cysteine 209, and cysteine 218/cysteine 246. The active-site Charge relay system is serine 222. Asparagine 231 is a glycosylation site (N-linked (GlcNAc...) asparagine).

The protein belongs to the peptidase S1 family. Tryptase subfamily. As to quaternary structure, homotetramer.

It is found in the secreted. The catalysed reaction is Preferential cleavage: Arg-|-Xaa, Lys-|-Xaa, but with more restricted specificity than trypsin.. In terms of biological role, tryptase is the major neutral protease present in mast cells and is secreted upon the coupled activation-degranulation response of this cell type. This is Tryptase-2 from Ovis aries (Sheep).